The sequence spans 394 residues: Acetate kinase (394 aa).

Asn-7 is a binding site for Mg(2+). ATP is bound at residue Lys-14. Arg-90 is a substrate binding site. Asp-147 acts as the Proton donor/acceptor in catalysis. ATP-binding positions include 204–208, 278–280, and 326–330; these read HLGNG, DLR, and GIGEN. Glu-380 is a binding site for Mg(2+).

It belongs to the acetokinase family. As to quaternary structure, homodimer. Mg(2+) is required as a cofactor. The cofactor is Mn(2+).

The protein localises to the cytoplasm. It carries out the reaction acetate + ATP = acetyl phosphate + ADP. It functions in the pathway metabolic intermediate biosynthesis; acetyl-CoA biosynthesis; acetyl-CoA from acetate: step 1/2. Functionally, catalyzes the formation of acetyl phosphate from acetate and ATP. Can also catalyze the reverse reaction. The chain is Acetate kinase from Flavobacterium johnsoniae (strain ATCC 17061 / DSM 2064 / JCM 8514 / BCRC 14874 / CCUG 350202 / NBRC 14942 / NCIMB 11054 / UW101) (Cytophaga johnsonae).